The sequence spans 73 residues: UPF0270 protein PMI2817 (73 aa).

Belongs to the UPF0270 family.

This chain is UPF0270 protein PMI2817, found in Proteus mirabilis (strain HI4320).